The following is a 559-amino-acid chain: 5'-AMP-activated protein kinase catalytic subunit alpha-1 (559 aa).

A Protein kinase domain is found at Tyr27–Phe279. Thr32 bears the Phosphothreonine mark. ATP contacts are provided by residues Leu33 to Val41 and Lys56. The active-site Proton acceptor is the Asp150. Position 183 is a phosphothreonine; by LKB1 and CaMKK2 (Thr183). Thr269 and Thr355 each carry phosphothreonine. Positions Glu302 to Glu381 are AIS. Residue Ser356 is modified to Phosphoserine. Residue Ser360 is modified to Phosphoserine; by ULK1. Thr368 carries the phosphothreonine; by ULK1 modification. A Phosphothreonine modification is found at Thr382. Residues Ser397, Ser467, and Ser486 each carry the phosphoserine modification. Polar residues predominate over residues Lys485–Arg505. A disordered region spans residues Lys485–Thr536. Phosphothreonine is present on residues Thr488 and Thr490. 4 positions are modified to phosphoserine: Ser496, Ser508, Ser524, and Ser527. The segment covering Ser516 to Leu535 has biased composition (low complexity).

This sequence belongs to the protein kinase superfamily. CAMK Ser/Thr protein kinase family. SNF1 subfamily. As to quaternary structure, AMPK is a heterotrimer of an alpha catalytic subunit (PRKAA1 or PRKAA2), a beta (PRKAB1 or PRKAB2) and a gamma non-catalytic subunits (PRKAG1, PRKAG2 or PRKAG3). Interacts with FNIP1 and FNIP2. In terms of assembly, (Microbial infection) Interacts with Dengue type 2 virus non-structural protein 1; this interaction promotes the AMPK/ERK/mTOR signaling pathway to induce autophagy. Mg(2+) is required as a cofactor. In terms of processing, ubiquitinated. Phosphorylated at Thr-183 by STK11/LKB1 in complex with STE20-related adapter-alpha (STRADA) pseudo kinase and CAB39. Also phosphorylated at Thr-183 by CAMKK2; triggered by a rise in intracellular calcium ions, without detectable changes in the AMP/ATP ratio. CAMKK1 can also phosphorylate Thr-183, but at a much lower level. Dephosphorylated by protein phosphatase 2A and 2C (PP2A and PP2C). Phosphorylated by ULK1 and ULK2; leading to negatively regulate AMPK activity and suggesting the existence of a regulatory feedback loop between ULK1, ULK2 and AMPK. Dephosphorylated by PPM1A and PPM1B. Post-translationally, glycosylated; O-GlcNAcylated by OGT, promoting the AMP-activated protein kinase (AMPK) activity.

Its subcellular location is the cytoplasm. It is found in the nucleus. The catalysed reaction is L-seryl-[protein] + ATP = O-phospho-L-seryl-[protein] + ADP + H(+). It carries out the reaction L-threonyl-[protein] + ATP = O-phospho-L-threonyl-[protein] + ADP + H(+). It catalyses the reaction L-seryl-[acetyl-CoA carboxylase] + ATP = O-phospho-L-seryl-[acetyl-CoA carboxylase] + ADP + H(+). The enzyme catalyses L-seryl-[3-hydroxy-3-methylglutaryl-coenzyme A reductase] + ATP = O-phospho-L-seryl-[3-hydroxy-3-methylglutaryl-coenzyme A reductase] + ADP + H(+). The catalysed reaction is L-seryl-[tau protein] + ATP = O-phospho-L-seryl-[tau protein] + ADP + H(+). It carries out the reaction L-threonyl-[tau protein] + ATP = O-phospho-L-threonyl-[tau protein] + ADP + H(+). Its activity is regulated as follows. Activated by phosphorylation on Thr-183. Binding of AMP to non-catalytic gamma subunit (PRKAG1, PRKAG2 or PRKAG3) results in allosteric activation, inducing phosphorylation on Thr-183. AMP-binding to gamma subunit also sustains activity by preventing dephosphorylation of Thr-183. ADP also stimulates Thr-183 phosphorylation, without stimulating already phosphorylated AMPK. ATP promotes dephosphorylation of Thr-183, rendering the enzyme inactive. Under physiological conditions AMPK mainly exists in its inactive form in complex with ATP, which is much more abundant than AMP. AMPK is activated by antihyperglycemic drug metformin, a drug prescribed to patients with type 2 diabetes: in vivo, metformin seems to mainly inhibit liver gluconeogenesis. However, metformin can be used to activate AMPK in muscle and other cells in culture or ex vivo. Selectively inhibited by compound C (6-[4-(2-Piperidin-1-yl-ethoxy)-phenyl)]-3-pyridin-4-yl-pyyrazolo[1,5-a] pyrimidine. Activated by resveratrol, a natural polyphenol present in red wine, and S17834, a synthetic polyphenol. Functionally, catalytic subunit of AMP-activated protein kinase (AMPK), an energy sensor protein kinase that plays a key role in regulating cellular energy metabolism. In response to reduction of intracellular ATP levels, AMPK activates energy-producing pathways and inhibits energy-consuming processes: inhibits protein, carbohydrate and lipid biosynthesis, as well as cell growth and proliferation. AMPK acts via direct phosphorylation of metabolic enzymes, and by longer-term effects via phosphorylation of transcription regulators. Regulates lipid synthesis by phosphorylating and inactivating lipid metabolic enzymes such as ACACA, ACACB, GYS1, HMGCR and LIPE; regulates fatty acid and cholesterol synthesis by phosphorylating acetyl-CoA carboxylase (ACACA and ACACB) and hormone-sensitive lipase (LIPE) enzymes, respectively. Promotes lipolysis of lipid droplets by mediating phosphorylation of isoform 1 of CHKA (CHKalpha2). Regulates insulin-signaling and glycolysis by phosphorylating IRS1, PFKFB2 and PFKFB3. AMPK stimulates glucose uptake in muscle by increasing the translocation of the glucose transporter SLC2A4/GLUT4 to the plasma membrane, possibly by mediating phosphorylation of TBC1D4/AS160. Regulates transcription and chromatin structure by phosphorylating transcription regulators involved in energy metabolism such as CRTC2/TORC2, FOXO3, histone H2B, HDAC5, MEF2C, MLXIPL/ChREBP, EP300, HNF4A, p53/TP53, SREBF1, SREBF2 and PPARGC1A. Acts as a key regulator of glucose homeostasis in liver by phosphorylating CRTC2/TORC2, leading to CRTC2/TORC2 sequestration in the cytoplasm. In response to stress, phosphorylates 'Ser-36' of histone H2B (H2BS36ph), leading to promote transcription. Acts as a key regulator of cell growth and proliferation by phosphorylating FNIP1, TSC2, RPTOR, WDR24 and ATG1/ULK1: in response to nutrient limitation, negatively regulates the mTORC1 complex by phosphorylating RPTOR component of the mTORC1 complex and by phosphorylating and activating TSC2. Also phosphorylates and inhibits GATOR2 subunit WDR24 in response to nutrient limitation, leading to suppress glucose-mediated mTORC1 activation. In response to energetic stress, phosphorylates FNIP1, inactivating the non-canonical mTORC1 signaling, thereby promoting nuclear translocation of TFEB and TFE3, and inducing transcription of lysosomal or autophagy genes. In response to nutrient limitation, promotes autophagy by phosphorylating and activating ATG1/ULK1. In that process, it also activates WDR45/WIPI4. Phosphorylates CASP6, thereby preventing its autoprocessing and subsequent activation. In response to nutrient limitation, phosphorylates transcription factor FOXO3 promoting FOXO3 mitochondrial import. Also acts as a regulator of cellular polarity by remodeling the actin cytoskeleton; probably by indirectly activating myosin. AMPK also acts as a regulator of circadian rhythm by mediating phosphorylation of CRY1, leading to destabilize it. May regulate the Wnt signaling pathway by phosphorylating CTNNB1, leading to stabilize it. Also has tau-protein kinase activity: in response to amyloid beta A4 protein (APP) exposure, activated by CAMKK2, leading to phosphorylation of MAPT/TAU; however the relevance of such data remains unclear in vivo. Also phosphorylates CFTR, EEF2K, KLC1, NOS3 and SLC12A1. Regulates hepatic lipogenesis. Activated via SIRT3, represses sterol regulatory element-binding protein (SREBP) transcriptional activities and ATP-consuming lipogenesis to restore cellular energy balance. Upon stress, regulates mitochondrial fragmentation through phosphorylation of MTFR1L. This Homo sapiens (Human) protein is 5'-AMP-activated protein kinase catalytic subunit alpha-1.